The sequence spans 293 residues: Elongation factor Ts (293 aa).

An involved in Mg(2+) ion dislocation from EF-Tu region spans residues 79–82 (TDFV).

Belongs to the EF-Ts family.

It is found in the cytoplasm. Associates with the EF-Tu.GDP complex and induces the exchange of GDP to GTP. It remains bound to the aminoacyl-tRNA.EF-Tu.GTP complex up to the GTP hydrolysis stage on the ribosome. This is Elongation factor Ts from Exiguobacterium sibiricum (strain DSM 17290 / CCUG 55495 / CIP 109462 / JCM 13490 / 255-15).